The chain runs to 924 residues: Periplasmic nitrate reductase (924 aa).

The segment at residues 1–30 is a signal peptide (tat-type signal); that stretch reads MNRRDFIKNTAIASAASVAGLSVPSSMLGA. The region spanning 35–91 is the 4Fe-4S Mo/W bis-MGD-type domain; the sequence is WKWDKAVCRFCGTGCGIMIARKDGKIVATKGDPAAPVNRGLNCIKGYFNAKIMYGED. Positions 42, 45, 49, and 77 each coordinate [4Fe-4S] cluster. Mo-bis(molybdopterin guanine dinucleotide) contacts are provided by residues lysine 79, glutamine 147, asparagine 172, cysteine 176, 209 to 216, methionine 417, glutamine 421, asparagine 527, 552 to 553, lysine 575, aspartate 602, and 814 to 823; these read WGANMAEM, SD, and TGRVLEHWHS. A substrate-binding site is contributed by tryptophan 890. Asparagine 898 and lysine 915 together coordinate Mo-bis(molybdopterin guanine dinucleotide).

This sequence belongs to the prokaryotic molybdopterin-containing oxidoreductase family. NasA/NapA/NarB subfamily. Component of the periplasmic nitrate reductase NapAB complex composed of NapA and NapB. It depends on [4Fe-4S] cluster as a cofactor. Mo-bis(molybdopterin guanine dinucleotide) is required as a cofactor. In terms of processing, predicted to be exported by the Tat system. The position of the signal peptide cleavage has not been experimentally proven.

The protein resides in the periplasm. It catalyses the reaction 2 Fe(II)-[cytochrome] + nitrate + 2 H(+) = 2 Fe(III)-[cytochrome] + nitrite + H2O. Its function is as follows. Catalytic subunit of the periplasmic nitrate reductase complex NapAB. Receives electrons from NapB and catalyzes the reduction of nitrate to nitrite. This Campylobacter jejuni subsp. jejuni serotype O:2 (strain ATCC 700819 / NCTC 11168) protein is Periplasmic nitrate reductase.